The following is an 872-amino-acid chain: Paladin (872 aa).

The disordered stretch occupies residues 1 to 37 (MGTTASAAQQVPSTVPSSENVQGNGSGSSNVEDRNSL). Residue Gly-2 is the site of N-myristoyl glycine attachment. The stretch at 186–210 (RRKENLHENLHDLEKGLRAENLELA) forms a coiled coil.

This sequence belongs to the paladin family.

It is found in the cytoplasm. The protein resides in the cytosol. This Xenopus tropicalis (Western clawed frog) protein is Paladin (pald1).